Consider the following 157-residue polypeptide: Snaclec EMS16 subunit alpha (157 aa).

An N-terminal signal peptide occupies residues Met-1–Ala-23. 3 disulfide bridges follow: Cys-27/Cys-38, Cys-55/Cys-152, and Cys-127/Cys-144. The region spanning Tyr-34–Lys-153 is the C-type lectin domain.

The protein belongs to the snaclec family. As to quaternary structure, heterodimer of subunits A and B; disulfide-linked. In terms of tissue distribution, expressed by the venom gland.

It localises to the secreted. Functionally, EMS16 is a potent and selective inhibitor of alpha-2/beta-1 (ITGA2/ITGB1) integrin and acts as a potent antagonist of platelet aggregation and cell migration. Binds specifically to the I domain of the alpha-2 subunit, in a metal ion-independent fashion. This chain is Snaclec EMS16 subunit alpha, found in Echis multisquamatus (Central Asian sand viper).